Here is a 406-residue protein sequence, read N- to C-terminus: Probable peptidoglycan glycosyltransferase FtsW (406 aa).

9 helical membrane-spanning segments follow: residues 22–42 (LWFVMSLIAILALGIVMVASA), 56–76 (FFMGRQILYLILGVSFGFMML), 86–106 (WGILLMLLSLVLLVLVLVPGI), 116–136 (WINLIVFNLQASEVAKVCMVV), 153–173 (LIGFALPLFLTSLFLIFLLME), 186–206 (VIALLFIGGAPVYQFIAIVIM), 280–300 (IWVEEMGLLGGVVLLSLFALM), 318–338 (FAGYMCFGFAILILAQVIINV), and 352–372 (LPLISYGGSSLIITLGSLFVV). The span at 383-397 (SKGGESEERKRKSDE) shows a compositional bias: basic and acidic residues. The segment at 383-406 (SKGGESEERKRKSDESIDDGEALA) is disordered.

Belongs to the SEDS family. FtsW subfamily.

It is found in the cell inner membrane. It carries out the reaction [GlcNAc-(1-&gt;4)-Mur2Ac(oyl-L-Ala-gamma-D-Glu-L-Lys-D-Ala-D-Ala)](n)-di-trans,octa-cis-undecaprenyl diphosphate + beta-D-GlcNAc-(1-&gt;4)-Mur2Ac(oyl-L-Ala-gamma-D-Glu-L-Lys-D-Ala-D-Ala)-di-trans,octa-cis-undecaprenyl diphosphate = [GlcNAc-(1-&gt;4)-Mur2Ac(oyl-L-Ala-gamma-D-Glu-L-Lys-D-Ala-D-Ala)](n+1)-di-trans,octa-cis-undecaprenyl diphosphate + di-trans,octa-cis-undecaprenyl diphosphate + H(+). It functions in the pathway cell wall biogenesis; peptidoglycan biosynthesis. In terms of biological role, peptidoglycan polymerase that is essential for cell division. The sequence is that of Probable peptidoglycan glycosyltransferase FtsW from Marinomonas mediterranea (strain ATCC 700492 / JCM 21426 / NBRC 103028 / MMB-1).